We begin with the raw amino-acid sequence, 297 residues long: Bifunctional protein FolD 1 (297 aa).

NADP(+)-binding positions include 164 to 166 (GRS), Ser-193, and Ile-234.

It belongs to the tetrahydrofolate dehydrogenase/cyclohydrolase family. In terms of assembly, homodimer.

It carries out the reaction (6R)-5,10-methylene-5,6,7,8-tetrahydrofolate + NADP(+) = (6R)-5,10-methenyltetrahydrofolate + NADPH. The catalysed reaction is (6R)-5,10-methenyltetrahydrofolate + H2O = (6R)-10-formyltetrahydrofolate + H(+). The protein operates within one-carbon metabolism; tetrahydrofolate interconversion. Functionally, catalyzes the oxidation of 5,10-methylenetetrahydrofolate to 5,10-methenyltetrahydrofolate and then the hydrolysis of 5,10-methenyltetrahydrofolate to 10-formyltetrahydrofolate. This is Bifunctional protein FolD 1 from Haloarcula marismortui (strain ATCC 43049 / DSM 3752 / JCM 8966 / VKM B-1809) (Halobacterium marismortui).